A 158-amino-acid chain; its full sequence is Small ribosomal subunit protein bS16 (158 aa).

Over residues 111–121 (AAAGLAEAPTK) the composition is skewed to low complexity. The segment at 111-158 (AAAGLAEAPTKPAKKAPKAEAAPKTEAAPKADAPKTEEQAGAGSGEQG) is disordered. Over residues 127–148 (PKAEAAPKTEAAPKADAPKTEE) the composition is skewed to basic and acidic residues.

Belongs to the bacterial ribosomal protein bS16 family.

The chain is Small ribosomal subunit protein bS16 from Salinispora arenicola (strain CNS-205).